Here is a 188-residue protein sequence, read N- to C-terminus: MGGQTLAESSQVLRQEVLGARRFSNFFWAGISTIGGVGFLLAGLSSYFGKNLLIVSDTTGLQFIPQGVALLFYGVAGSTVAGYLWLTMALNVGSGYNEFNKKSGQVTIFRWGFPGKNRRIELINKIADVQAVKAEIKEGVNPKRSLYLKVKQRRDIPLTRAGQPISLSQLENQGAELARFLGVPLEGL.

A run of 2 helical transmembrane segments spans residues 26–48 and 63–85; these read FFWA…SSYF and FIPQ…GYLW.

This sequence belongs to the Ycf4 family.

It is found in the cellular thylakoid membrane. In terms of biological role, seems to be required for the assembly of the photosystem I complex. This chain is Photosystem I assembly protein Ycf4, found in Synechocystis sp. (strain ATCC 27184 / PCC 6803 / Kazusa).